The sequence spans 492 residues: N-succinylglutamate 5-semialdehyde dehydrogenase (492 aa).

NAD(+) is bound at residue 220–225 (GSANTG). Active-site residues include Glu-243 and Cys-277.

Belongs to the aldehyde dehydrogenase family. AstD subfamily.

It carries out the reaction N-succinyl-L-glutamate 5-semialdehyde + NAD(+) + H2O = N-succinyl-L-glutamate + NADH + 2 H(+). It functions in the pathway amino-acid degradation; L-arginine degradation via AST pathway; L-glutamate and succinate from L-arginine: step 4/5. Functionally, catalyzes the NAD-dependent reduction of succinylglutamate semialdehyde into succinylglutamate. In Escherichia coli O81 (strain ED1a), this protein is N-succinylglutamate 5-semialdehyde dehydrogenase.